A 558-amino-acid polypeptide reads, in one-letter code: GPI mannosyltransferase 3 (558 aa).

The next 4 membrane-spanning stretches (helical) occupy residues 53-73 (GLRS…LKLL), 81-101 (VWFA…VSVF), 164-184 (AYCG…LLTL), and 190-210 (VPFL…AVVL). N-linked (GlcNAc...) asparagine glycosylation occurs at Asn220. The chain crosses the membrane as a helical span at residues 234 to 254 (IVLTGLIVLVAVLGGVMVLDY). An N-linked (GlcNAc...) asparagine glycan is attached at Asn275. The next 4 membrane-spanning stretches (helical) occupy residues 292 to 312 (VLVG…LVLW), 323 to 343 (PVLG…LIDH), 348 to 368 (FVFV…VRWS), and 372 to 392 (AVVV…IYLM).

This sequence belongs to the glycosyltransferase 22 family. PIGB subfamily.

Its subcellular location is the endoplasmic reticulum membrane. The protein operates within glycolipid biosynthesis; glycosylphosphatidylinositol-anchor biosynthesis. In terms of biological role, mannosyltransferase involved in glycosylphosphatidylinositol-anchor biosynthesis. Transfers the third alpha-1,2-mannose to Man2-GlcN-acyl-PI during GPI precursor assembly. In Trypanosoma brucei brucei, this protein is GPI mannosyltransferase 3 (GPI10).